The sequence spans 119 residues: Large ribosomal subunit protein uL18 (119 aa).

Positions 1 to 22 are disordered; that stretch reads MGHVEKVARRHKIKTRSKARGQ. The segment covering 8–19 has biased composition (basic residues); the sequence is ARRHKIKTRSKA.

The protein belongs to the universal ribosomal protein uL18 family. As to quaternary structure, part of the 50S ribosomal subunit; part of the 5S rRNA/L5/L18/L25 subcomplex. Contacts the 5S and 23S rRNAs.

This is one of the proteins that bind and probably mediate the attachment of the 5S RNA into the large ribosomal subunit, where it forms part of the central protuberance. The polypeptide is Large ribosomal subunit protein uL18 (Chlorobium phaeobacteroides (strain BS1)).